The sequence spans 302 residues: Citrate lyase subunit beta (302 aa).

Residues Arg69 and Glu132 each coordinate substrate. Residues Glu132 and Asp159 each contribute to the Mg(2+) site.

Belongs to the HpcH/HpaI aldolase family. Citrate lyase beta subunit subfamily. In terms of assembly, oligomer with a subunit composition of (alpha,beta,gamma)6. Mg(2+) serves as cofactor.

It is found in the cytoplasm. It catalyses the reaction citrate = oxaloacetate + acetate. The catalysed reaction is (3S)-citryl-CoA = oxaloacetate + acetyl-CoA. Its function is as follows. Represents a citryl-ACP lyase. The sequence is that of Citrate lyase subunit beta (citE) from Leuconostoc mesenteroides subsp. cremoris.